Consider the following 721-residue polypeptide: S-adenosyl-L-methionine-dependent tRNA 4-demethylwyosine synthase TYW1 (721 aa).

One can recognise a Flavodoxin-like domain in the interval 71–229 (VKIFYGSQTG…DFTAWKTKFI (159 aa)). FMN is bound by residues 77–81 (SQTGT) and 168–200 (VFGL…QRVL). Disordered stretches follow at residues 242 to 291 (ACGG…ELGT) and 305 to 339 (DLGN…TEDG). Over residues 250 to 274 (GKCESAQHGPGEARPHPQGELHPGD) the composition is skewed to basic and acidic residues. Acidic residues predominate over residues 275–290 (AEEEEPCESSSEDELG). Over residues 313–325 (VKREKREKSHQDG) the composition is skewed to basic and acidic residues. A Radical SAM core domain is found at 389 to 635 (YGIESHRCME…LLPDYEVACE (247 aa)). 3 residues coordinate [4Fe-4S] cluster: Cys405, Cys409, and Cys412.

This sequence belongs to the TYW1 family. It depends on [4Fe-4S] cluster as a cofactor.

It carries out the reaction N(1)-methylguanosine(37) in tRNA(Phe) + pyruvate + S-adenosyl-L-methionine = 4-demethylwyosine(37) in tRNA(Phe) + 5'-deoxyadenosine + L-methionine + CO2 + H2O. Its pathway is tRNA modification; wybutosine-tRNA(Phe) biosynthesis. Probable component of the wybutosine biosynthesis pathway. Wybutosine is a hyper modified guanosine with a tricyclic base found at the 3'-position adjacent to the anticodon of eukaryotic phenylalanine tRNA. Catalyzes the condensation of N-methylguanine with 2 carbon atoms from pyruvate to form the tricyclic 4-demethylwyosine, an intermediate in wybutosine biosynthesis. The polypeptide is S-adenosyl-L-methionine-dependent tRNA 4-demethylwyosine synthase TYW1 (Tyw1) (Mus musculus (Mouse)).